Here is a 356-residue protein sequence, read N- to C-terminus: Rhomboid-related protein 1 (356 aa).

The next 7 helical transmembrane spans lie at 107-129 (WCPP…FFYW), 172-194 (YMFL…LVGI), 201-223 (KIWR…QYAI), 227-249 (SLLV…NVIL), 256-275 (LRWI…FGGA), 290-312 (HLAH…YNVV), and 319-341 (IIRY…FVIV). Ser-233 acts as the Nucleophile in catalysis. His-293 is an active-site residue.

This sequence belongs to the peptidase S54 family.

The protein resides in the membrane. The enzyme catalyses Cleaves type-1 transmembrane domains using a catalytic dyad composed of serine and histidine that are contributed by different transmembrane domains.. Its function is as follows. Serine protease which activates lin-3 isoform a in the proximal vulva precursor cells (VPC) during vulva development to transmit the inductive anchor cell signal to the distal VPCs. The polypeptide is Rhomboid-related protein 1 (Caenorhabditis elegans).